We begin with the raw amino-acid sequence, 220 residues long: Large ribosomal subunit protein bL9 (220 aa).

Residues alanine 167–aspartate 184 are compositionally biased toward low complexity. Residues alanine 167–threonine 220 form a disordered region.

It belongs to the bacterial ribosomal protein bL9 family.

In terms of biological role, binds to the 23S rRNA. The protein is Large ribosomal subunit protein bL9 of Anaplasma marginale (strain St. Maries).